A 297-amino-acid polypeptide reads, in one-letter code: MTGINSQQEDIKIETLTQEEALELATALKQKLSHGELPNSDLESINKMVAGLGDNRGELRLTFAKSLGSIGEDAIPILCEALKNSSNVVIRRASAKTLNIIGNKKALPNLIEAFESDEDPVVQGSSAGAMATIGEPAIEPLLRILTESNCTAFQIGLINLALGFIGSKGPMGFNSAISSKNPEIRIAALNALAEQAQKSENKDVQALILNALKDQDSEVRAEAAIIVGKSMDQEEGAHQLHELLKDKNDQVRKNAALSLMKMEAVISIDFLDRAIRQESDEQVKGVMIVARNQLMKH.

This sequence belongs to the CpcE/RpcE/PecE family.

Functionally, an enzyme involved in the biosynthesis of bilin. This chain is Bilin biosynthesis protein MpeU (mpeU), found in Synechococcus sp. (strain WH8020).